A 214-amino-acid polypeptide reads, in one-letter code: A-type ATP synthase subunit D (214 aa).

This sequence belongs to the V-ATPase D subunit family. Has multiple subunits with at least A(3), B(3), C, D, E, F, H, I and proteolipid K(x).

It localises to the cell membrane. Component of the A-type ATP synthase that produces ATP from ADP in the presence of a proton gradient across the membrane. In Methanosphaera stadtmanae (strain ATCC 43021 / DSM 3091 / JCM 11832 / MCB-3), this protein is A-type ATP synthase subunit D.